Consider the following 158-residue polypeptide: Transcriptional repressor NrdR (158 aa).

The segment at 3 to 34 (CPSCQNTDSRVLESRAADAGRSVRRRRECLHC) is a zinc-finger region. In terms of domain architecture, ATP-cone spans 49–139 (ITVLKRNGNR…VYRHFRGIND (91 aa)).

This sequence belongs to the NrdR family. It depends on Zn(2+) as a cofactor.

Functionally, negatively regulates transcription of bacterial ribonucleotide reductase nrd genes and operons by binding to NrdR-boxes. In Prochlorococcus marinus (strain MIT 9303), this protein is Transcriptional repressor NrdR.